Here is a 305-residue protein sequence, read N- to C-terminus: RxLR effector protein PexRD25 (305 aa).

An N-terminal signal peptide occupies residues 1–16 (MRFLFYMLLACSAVVA). Positions 44-56 (RLLRDRRSVDEER) match the RxLR-dEER motif.

It belongs to the RxLR effector family.

The protein resides in the secreted. Its subcellular location is the host nucleus. The protein localises to the host nucleolus. Effector that enhances P.infestans colonization of Nicotiana benthamiana leaves. The sequence is that of RxLR effector protein PexRD25 from Phytophthora infestans (strain T30-4) (Potato late blight agent).